Consider the following 519-residue polypeptide: DDB1- and CUL4-associated factor 17 (519 aa).

The next 2 membrane-spanning stretches (helical) occupy residues Val186 to Ile206 and Gly222 to Ile242.

In terms of assembly, interacts with DDB1, CUL4A and CUL4B. In terms of tissue distribution, ubiquitously expressed in the embryo, with higher expression in brain, liver and skin tissues.

The protein localises to the membrane. The protein resides in the nucleus. It is found in the nucleolus. Its pathway is protein modification; protein ubiquitination. In terms of biological role, may function as a substrate receptor for CUL4-DDB1 E3 ubiquitin-protein ligase complex. The sequence is that of DDB1- and CUL4-associated factor 17 (Dcaf17) from Mus musculus (Mouse).